The chain runs to 168 residues: Ribosome maturation factor RimM (168 aa).

Residues 96 to 168 enclose the PRC barrel domain; it reads EGDYYWTDLI…IIVVEWDADF (73 aa).

This sequence belongs to the RimM family. Binds ribosomal protein uS19.

It localises to the cytoplasm. In terms of biological role, an accessory protein needed during the final step in the assembly of 30S ribosomal subunit, possibly for assembly of the head region. Essential for efficient processing of 16S rRNA. May be needed both before and after RbfA during the maturation of 16S rRNA. It has affinity for free ribosomal 30S subunits but not for 70S ribosomes. The polypeptide is Ribosome maturation factor RimM (Coxiella burnetii (strain Dugway 5J108-111)).